Consider the following 688-residue polypeptide: Glycine--tRNA ligase beta subunit (688 aa).

This sequence belongs to the class-II aminoacyl-tRNA synthetase family. In terms of assembly, tetramer of two alpha and two beta subunits.

The protein localises to the cytoplasm. It catalyses the reaction tRNA(Gly) + glycine + ATP = glycyl-tRNA(Gly) + AMP + diphosphate. The protein is Glycine--tRNA ligase beta subunit of Syntrophomonas wolfei subsp. wolfei (strain DSM 2245B / Goettingen).